The chain runs to 218 residues: Thiopurine S-methyltransferase (218 aa).

S-adenosyl-L-methionine-binding residues include tryptophan 11, leucine 46, glutamate 67, and arginine 122.

It belongs to the class I-like SAM-binding methyltransferase superfamily. TPMT family.

The protein resides in the cytoplasm. It catalyses the reaction S-adenosyl-L-methionine + a thiopurine = S-adenosyl-L-homocysteine + a thiopurine S-methylether.. The polypeptide is Thiopurine S-methyltransferase (Vibrio cholerae serotype O1 (strain ATCC 39541 / Classical Ogawa 395 / O395)).